The primary structure comprises 227 residues: MTKRSKAYRSAVTSIASDKLYPVEDAIGLVKETAYAKIDSAFEVALKLGIDPRKTDQLVRGVVMLPHGTGKAVRVVVFATGPSAQAALDSGASEVGGSDLVARVADGYVDFDVAISTPELMAQVGQLGRVLGPRGLMPNPKTGTVTADVGKAVKDALGGRIEFKTDKHANIHFVIGKTSFSVESLSENLSVALDEINRARPQKHKGRYIKKMFFSSTFGPSVRVALA.

Belongs to the universal ribosomal protein uL1 family. As to quaternary structure, part of the 50S ribosomal subunit.

Its function is as follows. Binds directly to 23S rRNA. The L1 stalk is quite mobile in the ribosome, and is involved in E site tRNA release. Functionally, protein L1 is also a translational repressor protein, it controls the translation of the L11 operon by binding to its mRNA. This is Large ribosomal subunit protein uL1 from Tropheryma whipplei (strain TW08/27) (Whipple's bacillus).